Consider the following 242-residue polypeptide: Phosphoribosylaminoimidazole-succinocarboxamide synthase (242 aa).

It belongs to the SAICAR synthetase family.

It carries out the reaction 5-amino-1-(5-phospho-D-ribosyl)imidazole-4-carboxylate + L-aspartate + ATP = (2S)-2-[5-amino-1-(5-phospho-beta-D-ribosyl)imidazole-4-carboxamido]succinate + ADP + phosphate + 2 H(+). Its pathway is purine metabolism; IMP biosynthesis via de novo pathway; 5-amino-1-(5-phospho-D-ribosyl)imidazole-4-carboxamide from 5-amino-1-(5-phospho-D-ribosyl)imidazole-4-carboxylate: step 1/2. The protein is Phosphoribosylaminoimidazole-succinocarboxamide synthase of Trichodesmium erythraeum (strain IMS101).